A 441-amino-acid polypeptide reads, in one-letter code: ATP-dependent RNA helicase SUB2 (441 aa).

Residues 1–17 show a composition bias toward acidic residues; it reads MSHEGEEELLDYSDSEE. Residues 1–47 are disordered; that stretch reads MSHEGEEELLDYSDSEEIALPSTTVESGSNGDAKAETTTVKEENTEQ. The segment covering 21–30 has biased composition (polar residues); the sequence is PSTTVESGSN. Positions 33–46 are enriched in basic and acidic residues; that stretch reads AKAETTTVKEENTE. The short motif at 57–85 is the Q motif element; sequence TGFRDFLLKPELLRAIVDCGFEHPSEVQQ. The Helicase ATP-binding domain occupies 88-263; it reads IPQSILGTDV…KKFMSSPLEI (176 aa). 101-108 is a binding site for ATP; the sequence is AKAGVGKT. The short motif at 210-213 is the DECD box element; the sequence is DECD. One can recognise a Helicase C-terminal domain in the interval 275–436; it reads GLQQYYVDVE…PYPAEGVDPS (162 aa).

This sequence belongs to the DEAD box helicase family. DECD subfamily.

Its subcellular location is the nucleus. The catalysed reaction is ATP + H2O = ADP + phosphate + H(+). In terms of biological role, ATP-binding RNA helicase involved in transcription elongation and required for the export of mRNA out of the nucleus. SUB2 also plays a role in pre-mRNA splicing and spliceosome assembly. May be involved in rDNA and telomeric silencing, and maintenance of genome integrity. This is ATP-dependent RNA helicase SUB2 (SUB2) from Yarrowia lipolytica (strain CLIB 122 / E 150) (Yeast).